The sequence spans 235 residues: uncharacterized protein (235 aa).

A run of 3 helical transmembrane segments spans residues Ile-41–Leu-61, Leu-71–Pro-91, and Ile-129–Ile-149.

It localises to the membrane. This is an uncharacterized protein from Schizosaccharomyces pombe (strain 972 / ATCC 24843) (Fission yeast).